An 84-amino-acid chain; its full sequence is ATP synthase subunit c (84 aa).

2 consecutive transmembrane segments (helical) span residues 9–29 (IIGA…GFAI) and 54–74 (IVAG…LLFI).

It belongs to the ATPase C chain family. As to quaternary structure, F-type ATPases have 2 components, F(1) - the catalytic core - and F(0) - the membrane proton channel. F(1) has five subunits: alpha(3), beta(3), gamma(1), delta(1), epsilon(1). F(0) has three main subunits: a(1), b(2) and c(10-14). The alpha and beta chains form an alternating ring which encloses part of the gamma chain. F(1) is attached to F(0) by a central stalk formed by the gamma and epsilon chains, while a peripheral stalk is formed by the delta and b chains.

The protein resides in the cell inner membrane. Its function is as follows. F(1)F(0) ATP synthase produces ATP from ADP in the presence of a proton or sodium gradient. F-type ATPases consist of two structural domains, F(1) containing the extramembraneous catalytic core and F(0) containing the membrane proton channel, linked together by a central stalk and a peripheral stalk. During catalysis, ATP synthesis in the catalytic domain of F(1) is coupled via a rotary mechanism of the central stalk subunits to proton translocation. Functionally, key component of the F(0) channel; it plays a direct role in translocation across the membrane. A homomeric c-ring of between 10-14 subunits forms the central stalk rotor element with the F(1) delta and epsilon subunits. This Glaesserella parasuis serovar 5 (strain SH0165) (Haemophilus parasuis) protein is ATP synthase subunit c.